The primary structure comprises 183 residues: ATP synthase subunit b, chloroplastic (183 aa).

Residues 28–48 (DIFEANVINILLLLFGLIYVL) form a helical membrane-spanning segment.

The protein belongs to the ATPase B chain family. F-type ATPases have 2 components, F(1) - the catalytic core - and F(0) - the membrane proton channel. F(1) has five subunits: alpha(3), beta(3), gamma(1), delta(1), epsilon(1). F(0) has four main subunits: a(1), b(1), b'(1) and c(10-14). The alpha and beta chains form an alternating ring which encloses part of the gamma chain. F(1) is attached to F(0) by a central stalk formed by the gamma and epsilon chains, while a peripheral stalk is formed by the delta, b and b' chains.

It localises to the plastid. The protein localises to the chloroplast thylakoid membrane. F(1)F(0) ATP synthase produces ATP from ADP in the presence of a proton or sodium gradient. F-type ATPases consist of two structural domains, F(1) containing the extramembraneous catalytic core and F(0) containing the membrane proton channel, linked together by a central stalk and a peripheral stalk. During catalysis, ATP synthesis in the catalytic domain of F(1) is coupled via a rotary mechanism of the central stalk subunits to proton translocation. In terms of biological role, component of the F(0) channel, it forms part of the peripheral stalk, linking F(1) to F(0). The polypeptide is ATP synthase subunit b, chloroplastic (Pyropia yezoensis (Susabi-nori)).